The following is a 192-amino-acid chain: Archaemetzincin (192 aa).

His-137 is a Zn(2+) binding site. Glu-138 serves as the catalytic Proton acceptor. His-141, His-147, Cys-148, Cys-153, Cys-172, and Cys-175 together coordinate Zn(2+).

The protein belongs to the peptidase M54 family. As to quaternary structure, monomer. It depends on Zn(2+) as a cofactor.

Functionally, probable zinc metalloprotease whose natural substrate is unknown. This Pyrococcus furiosus (strain ATCC 43587 / DSM 3638 / JCM 8422 / Vc1) protein is Archaemetzincin.